Consider the following 833-residue polypeptide: DNA gyrase subunit A (833 aa).

Positions 35 to 498 constitute a Topo IIA-type catalytic domain; sequence LPDVRDGMKP…SEDMFEDEDL (464 aa). Tyr123 acts as the O-(5'-phospho-DNA)-tyrosine intermediate in catalysis. A GyrA-box motif is present at residues 525 to 531; the sequence is QKRGGRG. Residues 803-833 form a disordered region; the sequence is RVDIEDDELDEDESIEEERDDRSEVEQGENE. Residues 806 to 821 show a composition bias toward acidic residues; the sequence is IEDDELDEDESIEEER.

Belongs to the type II topoisomerase GyrA/ParC subunit family. Heterotetramer, composed of two GyrA and two GyrB chains. In the heterotetramer, GyrA contains the active site tyrosine that forms a transient covalent intermediate with DNA, while GyrB binds cofactors and catalyzes ATP hydrolysis.

The protein resides in the cytoplasm. It carries out the reaction ATP-dependent breakage, passage and rejoining of double-stranded DNA.. Its function is as follows. A type II topoisomerase that negatively supercoils closed circular double-stranded (ds) DNA in an ATP-dependent manner to modulate DNA topology and maintain chromosomes in an underwound state. Negative supercoiling favors strand separation, and DNA replication, transcription, recombination and repair, all of which involve strand separation. Also able to catalyze the interconversion of other topological isomers of dsDNA rings, including catenanes and knotted rings. Type II topoisomerases break and join 2 DNA strands simultaneously in an ATP-dependent manner. The sequence is that of DNA gyrase subunit A from Halalkalibacterium halodurans (strain ATCC BAA-125 / DSM 18197 / FERM 7344 / JCM 9153 / C-125) (Bacillus halodurans).